The following is a 186-amino-acid chain: TATA-box-binding protein 2 (186 aa).

Repeat copies occupy residues 10–86 (IQNV…FDKL) and 101–179 (VQNI…VERI). Residues Lys53 and Lys63 each participate in a glycyl lysine isopeptide (Lys-Gly) (interchain with G-Cter in SAMP2) cross-link.

The protein belongs to the TBP family.

Functionally, general factor that plays a role in the activation of archaeal genes transcribed by RNA polymerase. Binds specifically to the TATA box promoter element which lies close to the position of transcription initiation. In Haloferax volcanii (strain ATCC 29605 / DSM 3757 / JCM 8879 / NBRC 14742 / NCIMB 2012 / VKM B-1768 / DS2) (Halobacterium volcanii), this protein is TATA-box-binding protein 2 (tbp2).